A 310-amino-acid polypeptide reads, in one-letter code: Protoheme IX farnesyltransferase (310 aa).

8 consecutive transmembrane segments (helical) span residues 31 to 51 (VIEL…RGSV), 53 to 73 (PLLI…ANTL), 102 to 122 (NALI…WGTS), 124 to 144 (LLSG…YTLL), 149 to 169 (TSQN…IGWS), 170 to 190 (AVTG…FFWT), 242 to 262 (LATG…FLVM), and 289 to 309 (LAVV…TLLG).

This sequence belongs to the UbiA prenyltransferase family. Protoheme IX farnesyltransferase subfamily.

Its subcellular location is the cell membrane. It carries out the reaction heme b + (2E,6E)-farnesyl diphosphate + H2O = Fe(II)-heme o + diphosphate. Its pathway is porphyrin-containing compound metabolism; heme O biosynthesis; heme O from protoheme: step 1/1. In terms of biological role, converts heme B (protoheme IX) to heme O by substitution of the vinyl group on carbon 2 of heme B porphyrin ring with a hydroxyethyl farnesyl side group. This chain is Protoheme IX farnesyltransferase, found in Mycobacterium sp. (strain JLS).